The following is a 378-amino-acid chain: UPF0754 membrane protein BCE33L0760 (378 aa).

2 helical membrane-spanning segments follow: residues 1-21 (MNIWLSMLTTTGLGAIIGGFT) and 357-377 (YLGALLGGMIGIVQGLLLLFL).

Belongs to the UPF0754 family.

The protein localises to the cell membrane. The protein is UPF0754 membrane protein BCE33L0760 of Bacillus cereus (strain ZK / E33L).